Consider the following 448-residue polypeptide: Glutamyl-tRNA reductase (448 aa).

Substrate contacts are provided by residues 48-51 (TCNR), Ser-100, 105-107 (EDQ), and Gln-111. Cys-49 acts as the Nucleophile in catalysis. NADP(+) is bound at residue 180–185 (GAGEIG).

Belongs to the glutamyl-tRNA reductase family. Homodimer.

The enzyme catalyses (S)-4-amino-5-oxopentanoate + tRNA(Glu) + NADP(+) = L-glutamyl-tRNA(Glu) + NADPH + H(+). It participates in porphyrin-containing compound metabolism; protoporphyrin-IX biosynthesis; 5-aminolevulinate from L-glutamyl-tRNA(Glu): step 1/2. Its function is as follows. Catalyzes the NADPH-dependent reduction of glutamyl-tRNA(Glu) to glutamate 1-semialdehyde (GSA). The chain is Glutamyl-tRNA reductase from Methanosarcina mazei (strain ATCC BAA-159 / DSM 3647 / Goe1 / Go1 / JCM 11833 / OCM 88) (Methanosarcina frisia).